The chain runs to 236 residues: 5'-methylthioadenosine/S-adenosylhomocysteine nucleosidase (236 aa).

Residue Glu12 is the Proton acceptor of the active site. Residues Gly78, Ile153, and Met174–Glu175 each bind substrate. The active-site Proton donor is Asp198.

Belongs to the PNP/UDP phosphorylase family. MtnN subfamily.

It carries out the reaction S-adenosyl-L-homocysteine + H2O = S-(5-deoxy-D-ribos-5-yl)-L-homocysteine + adenine. It catalyses the reaction S-methyl-5'-thioadenosine + H2O = 5-(methylsulfanyl)-D-ribose + adenine. The catalysed reaction is 5'-deoxyadenosine + H2O = 5-deoxy-D-ribose + adenine. Its pathway is amino-acid biosynthesis; L-methionine biosynthesis via salvage pathway; S-methyl-5-thio-alpha-D-ribose 1-phosphate from S-methyl-5'-thioadenosine (hydrolase route): step 1/2. In terms of biological role, catalyzes the irreversible cleavage of the glycosidic bond in both 5'-methylthioadenosine (MTA) and S-adenosylhomocysteine (SAH/AdoHcy) to adenine and the corresponding thioribose, 5'-methylthioribose and S-ribosylhomocysteine, respectively. Also cleaves 5'-deoxyadenosine, a toxic by-product of radical S-adenosylmethionine (SAM) enzymes, into 5-deoxyribose and adenine. The chain is 5'-methylthioadenosine/S-adenosylhomocysteine nucleosidase from Shewanella baltica (strain OS223).